The chain runs to 740 residues: Ion-translocating oxidoreductase complex subunit C (740 aa).

4Fe-4S ferredoxin-type domains follow at residues 369–397 (GEPQEEQSCIRCSACADACPADLLPQQLY) and 407–436 (KATTHNIADCIECGACAWVCPSNIPLVQYF). Residues Cys377, Cys380, Cys383, Cys387, Cys416, Cys419, Cys422, and Cys426 each contribute to the [4Fe-4S] cluster site. Disordered regions lie at residues 602-652 (KLEQ…DPRK), 664-685 (ARKLEQQQANAEPEEQVDPRKA), and 695-714 (KARKLEQQQANAEPEEQVDP). Over residues 605-615 (QQQANAEPEQQ) the composition is skewed to low complexity.

It belongs to the 4Fe4S bacterial-type ferredoxin family. RnfC subfamily. As to quaternary structure, the complex is composed of six subunits: RsxA, RsxB, RsxC, RsxD, RsxE and RsxG. Requires [4Fe-4S] cluster as cofactor.

The protein resides in the cell inner membrane. Part of a membrane-bound complex that couples electron transfer with translocation of ions across the membrane. Required to maintain the reduced state of SoxR. The sequence is that of Ion-translocating oxidoreductase complex subunit C from Escherichia coli O157:H7.